The sequence spans 548 residues: DNA ligase (548 aa).

Glutamate 252 contacts ATP. Lysine 254 (N6-AMP-lysine intermediate) is an active-site residue. Positions 259, 274, 303, 343, 414, and 420 each coordinate ATP.

The protein belongs to the ATP-dependent DNA ligase family. The cofactor is Mg(2+).

The enzyme catalyses ATP + (deoxyribonucleotide)n-3'-hydroxyl + 5'-phospho-(deoxyribonucleotide)m = (deoxyribonucleotide)n+m + AMP + diphosphate.. In terms of biological role, DNA ligase that seals nicks in double-stranded DNA during DNA replication, DNA recombination and DNA repair. The polypeptide is DNA ligase (Natronomonas pharaonis (strain ATCC 35678 / DSM 2160 / CIP 103997 / JCM 8858 / NBRC 14720 / NCIMB 2260 / Gabara) (Halobacterium pharaonis)).